A 424-amino-acid chain; its full sequence is MKGRVRIRGIYATALTSIFSSLSYEIVQQSVEISERFMQEINNLSADITIKDFEDDRGKIIVMGNGIIEDDLRNVFKYSFHWRSPVKLYSVIEIDESCTYANFKVEPCLREGIVIKPPYDGKIILSETKAVSKYAIVWRGKGITTFSEHIVDEEEKMRLLTLSLPLNRKGYNVKWRSNAKYVALNELKEDLERLILRYENREFRDQGEDFYLITLSLPDKLYLDEVRKNVVDTVKYHHMLKLSYNREVDSLEKDKKGSLGKLLEGLISDFLKIEHIKADGKVIYLRGGKVIEKEVNDNGYRIVLRREFEGNGILDGIGKKIEEGDYDIVEYNSDKWYQIHKYYSGIDNSLKGVYINISTPPELLRGKIRYLDLEIDIAIRDSEIALLDEDELNKKSIYMPSSLVNKAKEVVNYLINRIQQNKLS.

It belongs to the FAU-1 family.

Its function is as follows. Probable RNase involved in rRNA stability through maturation and/or degradation of precursor rRNAs. Binds to RNA in loop regions with AU-rich sequences. The protein is Probable ribonuclease FAU-1 of Saccharolobus solfataricus (strain ATCC 35092 / DSM 1617 / JCM 11322 / P2) (Sulfolobus solfataricus).